Consider the following 782-residue polypeptide: Isoamylase 3, chloroplastic (782 aa).

The transit peptide at 1–68 (MDSIGINRAP…EKVRRFDSVR (68 aa)) directs the protein to the chloroplast. A compositionally biased stretch (polar residues) spans 68–81 (RSTTARAQNGNAGR). The tract at residues 68 to 88 (RSTTARAQNGNAGRSMTEERG) is disordered. Asp-445 acts as the Nucleophile in catalysis. Residue Glu-482 is the Proton donor of the active site.

The protein belongs to the glycosyl hydrolase 13 family. As to expression, expressed in leaves. Expressed at low levels in developing endosperm.

The protein localises to the plastid. It is found in the chloroplast. The protein resides in the amyloplast. The catalysed reaction is Hydrolysis of (1-&gt;6)-alpha-D-glucosidic branch linkages in glycogen, amylopectin and their beta-limit dextrins.. Functionally, starch-debranching enzyme that plays a role in the degradation of transitory starch during the night in leaf blades, facilitates the formation of spherical amyloplasts containing compound granules in the endosperm, and affects morphological characteristics of plastids. This chain is Isoamylase 3, chloroplastic, found in Oryza sativa subsp. japonica (Rice).